A 130-amino-acid polypeptide reads, in one-letter code: Histone H2A type 1-B/E (130 aa).

The interval Met1–Ala22 is disordered. Ser2 carries the N-acetylserine modification. Phosphoserine; by RPS6KA5 is present on Ser2. Arg4 carries the citrulline; alternate modification. Arg4 is subject to Symmetric dimethylarginine; by PRMT5; alternate. N6-(2-hydroxyisobutyryl)lysine; alternate occurs at positions 6 and 10. N6-acetyllysine; alternate is present on Lys6. Residues Gln7–Ser19 are compositionally biased toward basic residues. 2 positions are modified to N6-(beta-hydroxybutyryl)lysine; alternate: Lys10 and Lys14. Lys10 is modified (N6-lactoyllysine; alternate). At Lys10 the chain carries N6-succinyllysine; alternate. Lys14 is covalently cross-linked (Glycyl lysine isopeptide (Lys-Gly) (interchain with G-Cter in ubiquitin); alternate). Residue Lys16 forms a Glycyl lysine isopeptide (Lys-Gly) (interchain with G-Cter in ubiquitin) linkage. Lys37 is modified (N6-(2-hydroxyisobutyryl)lysine; alternate). Position 37 is an N6-(beta-hydroxybutyryl)lysine; alternate (Lys37). N6-crotonyllysine; alternate is present on Lys37. 2 positions are modified to N6-(2-hydroxyisobutyryl)lysine: Lys75 and Lys76. Lys96 is modified (N6-(2-hydroxyisobutyryl)lysine; alternate). Lys96 carries the post-translational modification N6-(beta-hydroxybutyryl)lysine; alternate. Residue Lys96 is modified to N6-succinyllysine; alternate. Residue Lys96 is modified to N6-glutaryllysine; alternate. Gln105 is modified (N5-methylglutamine). Lys119 bears the N6-(2-hydroxyisobutyryl)lysine; alternate mark. N6-(beta-hydroxybutyryl)lysine; alternate is present on Lys119. N6-crotonyllysine; alternate is present on residues Lys119 and Lys120. N6-glutaryllysine; alternate is present on residues Lys119 and Lys120. Residue Lys120 forms a Glycyl lysine isopeptide (Lys-Gly) (interchain with G-Cter in ubiquitin); alternate linkage. Thr121 carries the phosphothreonine; by DCAF1 modification. At Lys126 the chain carries N6-crotonyllysine; alternate. Lys126 bears the N6-glutaryllysine; alternate mark.

The protein belongs to the histone H2A family. In terms of assembly, the nucleosome is a histone octamer containing two molecules each of H2A, H2B, H3 and H4 assembled in one H3-H4 heterotetramer and two H2A-H2B heterodimers. The octamer wraps approximately 147 bp of DNA. Post-translationally, deiminated on Arg-4 in granulocytes upon calcium entry. Monoubiquitination of Lys-120 (H2AK119Ub) by RING1, TRIM37 and RNF2/RING2 complex gives a specific tag for epigenetic transcriptional repression and participates in X chromosome inactivation of female mammals. It is involved in the initiation of both imprinted and random X inactivation. Ubiquitinated H2A is enriched in inactive X chromosome chromatin. Ubiquitination of H2A functions downstream of methylation of 'Lys-27' of histone H3 (H3K27me). H2AK119Ub by RNF2/RING2 can also be induced by ultraviolet and may be involved in DNA repair. Monoubiquitination of Lys-120 (H2AK119Ub) by TRIM37 may promote transformation of cells in a number of breast cancers. Following DNA double-strand breaks (DSBs), it is ubiquitinated through 'Lys-63' linkage of ubiquitin moieties by the E2 ligase UBE2N and the E3 ligases RNF8 and RNF168, leading to the recruitment of repair proteins to sites of DNA damage. Ubiquitination at Lys-14 and Lys-16 (H2AK13Ub and H2AK15Ub, respectively) in response to DNA damage is initiated by RNF168 that mediates monoubiquitination at these 2 sites, and 'Lys-63'-linked ubiquitin are then conjugated to monoubiquitin; RNF8 is able to extend 'Lys-63'-linked ubiquitin chains in vitro. Deubiquitinated by USP51 at Lys-14 and Lys-16 (H2AK13Ub and H2AK15Ub, respectively) after damaged DNA is repaired. H2AK119Ub and ionizing radiation-induced 'Lys-63'-linked ubiquitination (H2AK13Ub and H2AK15Ub) are distinct events. In terms of processing, phosphorylation on Ser-2 (H2AS1ph) is enhanced during mitosis. Phosphorylation on Ser-2 by RPS6KA5/MSK1 directly represses transcription. Acetylation of H3 inhibits Ser-2 phosphorylation by RPS6KA5/MSK1. Phosphorylation at Thr-121 (H2AT120ph) by DCAF1 is present in the regulatory region of many tumor suppresor genes and down-regulates their transcription. Post-translationally, glutamine methylation at Gln-105 (H2AQ104me) by FBL is specifically dedicated to polymerase I. It is present at 35S ribosomal DNA locus and impairs binding of the FACT complex. Symmetric dimethylation on Arg-4 by the PRDM1/PRMT5 complex may play a crucial role in the germ-cell lineage. In terms of processing, crotonylation (Kcr) is specifically present in male germ cells and marks testis-specific genes in post-meiotic cells, including X-linked genes that escape sex chromosome inactivation in haploid cells. Crotonylation marks active promoters and enhancers and confers resistance to transcriptional repressors. It is also associated with post-meiotically activated genes on autosomes. Post-translationally, lactylated in macrophages by EP300/P300 by using lactoyl-CoA directly derived from endogenous or exogenous lactate, leading to stimulates gene transcription.

It localises to the nucleus. It is found in the chromosome. Its function is as follows. Core component of nucleosome. Nucleosomes wrap and compact DNA into chromatin, limiting DNA accessibility to the cellular machineries which require DNA as a template. Histones thereby play a central role in transcription regulation, DNA repair, DNA replication and chromosomal stability. DNA accessibility is regulated via a complex set of post-translational modifications of histones, also called histone code, and nucleosome remodeling. The sequence is that of Histone H2A type 1-B/E from Homo sapiens (Human).